The following is a 270-amino-acid chain: Aliphatic sulfonates import ATP-binding protein SsuB 3 (270 aa).

Residues 17-238 (LAVQNLKKAF…ARGSHRLAAL (222 aa)) form the ABC transporter domain. 49-56 (GRSGCGKS) contacts ATP.

The protein belongs to the ABC transporter superfamily. Aliphatic sulfonates importer (TC 3.A.1.17.2) family. The complex is composed of two ATP-binding proteins (SsuB), two transmembrane proteins (SsuC) and a solute-binding protein (SsuA).

The protein resides in the cell inner membrane. It catalyses the reaction ATP + H2O + aliphatic sulfonate-[sulfonate-binding protein]Side 1 = ADP + phosphate + aliphatic sulfonateSide 2 + [sulfonate-binding protein]Side 1.. Functionally, part of the ABC transporter complex SsuABC involved in aliphatic sulfonates import. Responsible for energy coupling to the transport system. This chain is Aliphatic sulfonates import ATP-binding protein SsuB 3, found in Pseudomonas syringae pv. tomato (strain ATCC BAA-871 / DC3000).